A 552-amino-acid polypeptide reads, in one-letter code: 5'-AMP-activated protein kinase catalytic subunit alpha-2 (552 aa).

One can recognise a Protein kinase domain in the interval 16–268 (YVLGDTLGVG…IKDIREHEWF (253 aa)). ATP is bound by residues 22-30 (LGVGTFGKV) and Lys45. Asp139 functions as the Proton acceptor in the catalytic mechanism. The residue at position 172 (Thr172) is a Phosphothreonine; by LKB1 and CaMKK2. Position 258 is a phosphothreonine (Thr258). Residues 291-376 (EAVKEVCEKF…PERMPPLIAD (86 aa)) are AIS. Phosphoserine is present on Ser377. The tract at residues 478–519 (EQRSGSSTPQRSCSAAGLHRPRSSLDSVTAESHSLSGSLSGS) is disordered. Positions 480–490 (RSGSSTPQRSC) are enriched in polar residues. Ser491 is modified (phosphoserine). Low complexity predominate over residues 509–519 (SHSLSGSLSGS).

This sequence belongs to the protein kinase superfamily. CAMK Ser/Thr protein kinase family. SNF1 subfamily. As to quaternary structure, AMPK is a heterotrimer of an alpha catalytic subunit (PRKAA1 or PRKAA2), a beta (PRKAB1 or PRKAB2) and a gamma non-catalytic subunits (PRKAG1, PRKAG2 or PRKAG3). Interacts with FNIP1 and FNIP2. Interacts with DUSP29. Interacts with ARF6. The phosphorylated form at Thr-172 mediated by CamKK2 interacts with ACSS2. Mg(2+) serves as cofactor. Post-translationally, ubiquitinated. In terms of processing, phosphorylated at Thr-172 by STK11/LKB1 in complex with STE20-related adapter-alpha (STRADA) pseudo kinase and CAB39. Also phosphorylated at Thr-172 by CAMKK2; triggered by a rise in intracellular calcium ions, without detectable changes in the AMP/ATP ratio. CAMKK1 can also phosphorylate Thr-172, but at much lower level. Dephosphorylated by protein phosphatase 2A and 2C (PP2A and PP2C). Phosphorylated by ULK1; leading to negatively regulate AMPK activity and suggesting the existence of a regulatory feedback loop between ULK1 and AMPK. Dephosphorylated by PPM1A and PPM1B at Thr-172 (mediated by STK11/LKB1).

Its subcellular location is the cytoplasm. The protein resides in the nucleus. It catalyses the reaction L-seryl-[protein] + ATP = O-phospho-L-seryl-[protein] + ADP + H(+). The enzyme catalyses L-threonyl-[protein] + ATP = O-phospho-L-threonyl-[protein] + ADP + H(+). The catalysed reaction is L-seryl-[acetyl-CoA carboxylase] + ATP = O-phospho-L-seryl-[acetyl-CoA carboxylase] + ADP + H(+). It carries out the reaction L-seryl-[3-hydroxy-3-methylglutaryl-coenzyme A reductase] + ATP = O-phospho-L-seryl-[3-hydroxy-3-methylglutaryl-coenzyme A reductase] + ADP + H(+). Its activity is regulated as follows. Activated by phosphorylation on Thr-172. Binding of AMP to non-catalytic gamma subunit (PRKAG1, PRKAG2 or PRKAG3) results in allosteric activation, inducing phosphorylation on Thr-172. AMP-binding to gamma subunit also sustains activity by preventing dephosphorylation of Thr-172. ADP also stimulates Thr-172 phosphorylation, without stimulating already phosphorylated AMPK. ATP promotes dephosphorylation of Thr-172, rendering the enzyme inactive. Under physiological conditions AMPK mainly exists in its inactive form in complex with ATP, which is much more abundant than AMP. Selectively inhibited by compound C (6-[4-(2-Piperidin-1-yl-ethoxy)-phenyl)]-3-pyridin-4-yl-pyyrazolo[1,5-a] pyrimidine. Activated by resveratrol, a natural polyphenol present in red wine, and S17834, a synthetic polyphenol. Salicylate/aspirin directly activates kinase activity, primarily by inhibiting Thr-172 dephosphorylation. Its function is as follows. Catalytic subunit of AMP-activated protein kinase (AMPK), an energy sensor protein kinase that plays a key role in regulating cellular energy metabolism. In response to reduction of intracellular ATP levels, AMPK activates energy-producing pathways and inhibits energy-consuming processes: inhibits protein, carbohydrate and lipid biosynthesis, as well as cell growth and proliferation. AMPK acts via direct phosphorylation of metabolic enzymes, and by longer-term effects via phosphorylation of transcription regulators. Regulates lipid synthesis by phosphorylating and inactivating lipid metabolic enzymes such as ACACA, ACACB, GYS1, HMGCR and LIPE; regulates fatty acid and cholesterol synthesis by phosphorylating acetyl-CoA carboxylase (ACACA and ACACB) and hormone-sensitive lipase (LIPE) enzymes, respectively. Promotes lipolysis of lipid droplets by mediating phosphorylation of isoform 1 of CHKA (CHKalpha2). Regulates insulin-signaling and glycolysis by phosphorylating IRS1, PFKFB2 and PFKFB3. Involved in insulin receptor/INSR internalization. AMPK stimulates glucose uptake in muscle by increasing the translocation of the glucose transporter SLC2A4/GLUT4 to the plasma membrane, possibly by mediating phosphorylation of TBC1D4/AS160. Regulates transcription and chromatin structure by phosphorylating transcription regulators involved in energy metabolism such as CRTC2/TORC2, FOXO3, histone H2B, HDAC5, MEF2C, MLXIPL/ChREBP, EP300, HNF4A, p53/TP53, SREBF1, SREBF2 and PPARGC1A. Acts as a key regulator of glucose homeostasis in liver by phosphorylating CRTC2/TORC2, leading to CRTC2/TORC2 sequestration in the cytoplasm. In response to stress, phosphorylates 'Ser-36' of histone H2B (H2BS36ph), leading to promote transcription. Acts as a key regulator of cell growth and proliferation by phosphorylating FNIP1, TSC2, RPTOR, WDR24 and ATG1/ULK1: in response to nutrient limitation, negatively regulates the mTORC1 complex by phosphorylating RPTOR component of the mTORC1 complex and by phosphorylating and activating TSC2. Also phosphorylates and inhibits GATOR2 subunit WDR24 in response to nutrient limitation, leading to suppress glucose-mediated mTORC1 activation. In response to energetic stress, phosphorylates FNIP1, inactivating the non-canonical mTORC1 signaling, thereby promoting nuclear translocation of TFEB and TFE3, and inducing transcription of lysosomal or autophagy genes. In response to nutrient limitation, promotes autophagy by phosphorylating and activating ATG1/ULK1. In that process also activates WDR45/WIPI4. Phosphorylates CASP6, thereby preventing its autoprocessing and subsequent activation. AMPK also acts as a regulator of circadian rhythm by mediating phosphorylation of CRY1, leading to destabilize it. May regulate the Wnt signaling pathway by phosphorylating CTNNB1, leading to stabilize it. Also acts as a regulator of cellular polarity by remodeling the actin cytoskeleton; probably by indirectly activating myosin. Also phosphorylates CFTR, EEF2K, KLC1, NOS3 and SLC12A1. Plays an important role in the differential regulation of pro-autophagy (composed of PIK3C3, BECN1, PIK3R4 and UVRAG or ATG14) and non-autophagy (composed of PIK3C3, BECN1 and PIK3R4) complexes, in response to glucose starvation. Can inhibit the non-autophagy complex by phosphorylating PIK3C3 and can activate the pro-autophagy complex by phosphorylating BECN1. Upon glucose starvation, promotes ARF6 activation in a kinase-independent manner leading to cell migration. Upon glucose deprivation mediates the phosphorylation of ACSS2 at 'Ser-659', which exposes the nuclear localization signal of ACSS2, required for its interaction with KPNA1 and nuclear translocation. Upon stress, regulates mitochondrial fragmentation through phosphorylation of MTFR1L. The protein is 5'-AMP-activated protein kinase catalytic subunit alpha-2 (PRKAA2) of Sus scrofa (Pig).